The sequence spans 389 residues: Phospho-N-acetylmuramoyl-pentapeptide-transferase (389 aa).

10 consecutive transmembrane segments (helical) span residues 25-45 (RAVM…PWVI), 73-93 (TMGG…WADL), 97-117 (FIWI…VDDY), 135-155 (FWQT…VSEI), 190-210 (VSYP…IVGS), 222-242 (GLVI…AYVM), 258-278 (GAGE…AFLW), 286-306 (VFMG…IAVI), 311-331 (IVLF…MMQV), and 366-386 (QVVV…LSSL).

This sequence belongs to the glycosyltransferase 4 family. MraY subfamily. The cofactor is Mg(2+).

It localises to the cell inner membrane. It carries out the reaction UDP-N-acetyl-alpha-D-muramoyl-L-alanyl-gamma-D-glutamyl-meso-2,6-diaminopimeloyl-D-alanyl-D-alanine + di-trans,octa-cis-undecaprenyl phosphate = di-trans,octa-cis-undecaprenyl diphospho-N-acetyl-alpha-D-muramoyl-L-alanyl-D-glutamyl-meso-2,6-diaminopimeloyl-D-alanyl-D-alanine + UMP. Its pathway is cell wall biogenesis; peptidoglycan biosynthesis. Catalyzes the initial step of the lipid cycle reactions in the biosynthesis of the cell wall peptidoglycan: transfers peptidoglycan precursor phospho-MurNAc-pentapeptide from UDP-MurNAc-pentapeptide onto the lipid carrier undecaprenyl phosphate, yielding undecaprenyl-pyrophosphoryl-MurNAc-pentapeptide, known as lipid I. The chain is Phospho-N-acetylmuramoyl-pentapeptide-transferase from Polynucleobacter asymbioticus (strain DSM 18221 / CIP 109841 / QLW-P1DMWA-1) (Polynucleobacter necessarius subsp. asymbioticus).